The following is a 147-amino-acid chain: Hemoglobin subunit beta-H0 (147 aa).

Residues His-3–His-147 enclose the Globin domain. 2 residues coordinate heme b: His-64 and His-93.

This sequence belongs to the globin family. Heterotetramer of two alpha chains and two beta chains. As to expression, red blood cells.

Functionally, this is a minor early embryonic beta chain. In Mus musculus (Mouse), this protein is Hemoglobin subunit beta-H0 (Hbb-bh0).